The chain runs to 687 residues: Leucine-rich repeat and fibronectin type III domain-containing protein 1-like protein (687 aa).

The first 17 residues, 1-17 (MEWLIFSLLLLAVSASG), serve as a signal peptide directing secretion. The LRRNT domain maps to 18 to 51 (QLCPKRCMCQNLSPSLAILCAKTGLLFVPTVIDR). Residues 18–527 (QLCPKRCMCQ…LRSHFLGGTM (510 aa)) are Extracellular-facing. 7 LRR repeats span residues 52 to 73 (RTVE…DFAN), 76 to 97 (SLLH…TFAD), 100 to 121 (RLRA…HFRG), 124 to 145 (NLRH…AFDD), 149 to 170 (TLED…TIGR), 173 to 194 (NVNT…IFSN), and 197 to 218 (KLAR…PLFL). N-linked (GlcNAc...) asparagine glycosylation is present at Asn73. In terms of domain architecture, LRRCT spans 241 to 287 (NPLHCNCELLWLRRLTREDDLETCASPPDLTAKYFWTIPEEEFICDP). One can recognise an Ig-like domain in the interval 287-376 (PPVITRKSPK…STGTVELVVS (90 aa)). Cys309 and Cys358 are oxidised to a cystine. 6 N-linked (GlcNAc...) asparagine glycosylation sites follow: Asn331, Asn340, Asn346, Asn383, Asn410, and Asn450. The tract at residues 384 to 412 (STNRIREPDPGPSDILTSAKSTSSVSNET) is disordered. Positions 398–412 (ILTSAKSTSSVSNET) are enriched in polar residues. In terms of domain architecture, Fibronectin type-III spans 415 to 510 (QERKVVLAEL…VGCVTFVTET (96 aa)). Residues 528 to 548 (IIIIGGIIVASVLVFIIILMI) form a helical membrane-spanning segment. Residues 549-687 (RYKVYSQHGA…AQRDWSDFKI (139 aa)) lie on the Cytoplasmic side of the membrane. Disordered regions lie at residues 563–601 (GTAM…GSLG) and 630–687 (EDIV…DFKI). Composition is skewed to polar residues over residues 565–576 (AMTNVRSQTNGG) and 657–672 (EGTS…SPQV). Positions 673 to 687 (SDEKKAQRDWSDFKI) are enriched in basic and acidic residues.

It belongs to the LRFN family.

The protein localises to the membrane. It localises to the synapse. Functionally, may be involved in the regulation of excitatory synapses. The protein is Leucine-rich repeat and fibronectin type III domain-containing protein 1-like protein (lrfn1l) of Danio rerio (Zebrafish).